The primary structure comprises 100 residues: Aspartyl/glutamyl-tRNA(Asn/Gln) amidotransferase subunit C (100 aa).

Belongs to the GatC family. As to quaternary structure, heterotrimer of A, B and C subunits.

The catalysed reaction is L-glutamyl-tRNA(Gln) + L-glutamine + ATP + H2O = L-glutaminyl-tRNA(Gln) + L-glutamate + ADP + phosphate + H(+). It catalyses the reaction L-aspartyl-tRNA(Asn) + L-glutamine + ATP + H2O = L-asparaginyl-tRNA(Asn) + L-glutamate + ADP + phosphate + 2 H(+). In terms of biological role, allows the formation of correctly charged Asn-tRNA(Asn) or Gln-tRNA(Gln) through the transamidation of misacylated Asp-tRNA(Asn) or Glu-tRNA(Gln) in organisms which lack either or both of asparaginyl-tRNA or glutaminyl-tRNA synthetases. The reaction takes place in the presence of glutamine and ATP through an activated phospho-Asp-tRNA(Asn) or phospho-Glu-tRNA(Gln). In Streptococcus equi subsp. equi (strain 4047), this protein is Aspartyl/glutamyl-tRNA(Asn/Gln) amidotransferase subunit C.